A 156-amino-acid chain; its full sequence is MGRFIFVSFGLLVVFLSLSGTGADCPSDWSSFRRYCYKPFKQLKTWEDAERFCWEQVKGAHLVSIESSGEGDFVAQLLSENIKTTKYHVWIGLSIQNKRQQCRSIWSDGSSVSYENLVKPFSKKCFVLKKESEFHKWFNIYCGERNLFMCKFLQPR.

Residues 1–23 (MGRFIFVSFGLLVVFLSLSGTGA) form the signal peptide. 3 disulfides stabilise this stretch: cysteine 25-cysteine 36, cysteine 53-cysteine 150, and cysteine 125-cysteine 142. A C-type lectin domain is found at 32 to 151 (FRRYCYKPFK…CGERNLFMCK (120 aa)).

The protein belongs to the snaclec family. As to quaternary structure, heterodimer of subunits alpha and beta; disulfide-linked. As to expression, expressed by the venom gland.

It localises to the secreted. In terms of biological role, snaclec that induces platelet aggregation in either human platelet rich plasma (PRP) or washed platelet suspensions. It causes aggregation in a dose-dependent manner even in the absence of various platelet agonists such as ADP or von Willebrand factor (vWF). Interestingly, it does not induce aggregation in rabbit PRP. A monoclonal antibody against the platelet GPIb receptor blocks the aggregation induced by trimecetin, suggesting that it acts by binding to GPIb (GP1BA/GP1BB). The chain is Snaclec trimecetin subunit alpha from Protobothrops mucrosquamatus (Taiwan habu).